A 258-amino-acid polypeptide reads, in one-letter code: UDP-2,3-diacylglucosamine hydrolase (258 aa).

Mn(2+) contacts are provided by D15, H17, D48, N88, and H123. A substrate-binding site is contributed by 88–89 (NR). Residues D131, S169, N173, K176, and H204 each coordinate substrate. Residues H204 and H206 each contribute to the Mn(2+) site.

It belongs to the LpxH family. Mn(2+) serves as cofactor.

The protein localises to the cell inner membrane. It catalyses the reaction UDP-2-N,3-O-bis[(3R)-3-hydroxytetradecanoyl]-alpha-D-glucosamine + H2O = 2-N,3-O-bis[(3R)-3-hydroxytetradecanoyl]-alpha-D-glucosaminyl 1-phosphate + UMP + 2 H(+). It participates in glycolipid biosynthesis; lipid IV(A) biosynthesis; lipid IV(A) from (3R)-3-hydroxytetradecanoyl-[acyl-carrier-protein] and UDP-N-acetyl-alpha-D-glucosamine: step 4/6. In terms of biological role, hydrolyzes the pyrophosphate bond of UDP-2,3-diacylglucosamine to yield 2,3-diacylglucosamine 1-phosphate (lipid X) and UMP by catalyzing the attack of water at the alpha-P atom. Involved in the biosynthesis of lipid A, a phosphorylated glycolipid that anchors the lipopolysaccharide to the outer membrane of the cell. The protein is UDP-2,3-diacylglucosamine hydrolase of Bordetella bronchiseptica (strain ATCC BAA-588 / NCTC 13252 / RB50) (Alcaligenes bronchisepticus).